Reading from the N-terminus, the 1212-residue chain is Metabotropic glutamate receptor 5 (1212 aa).

Residues 1-20 form the signal peptide; the sequence is MVLLLILSVLLLKEDVRGSA. Over 22–580 the chain is Extracellular; sequence SSERRVVAHM…QYLRWGDPEP (559 aa). Cysteine 57 and cysteine 99 are oxidised to a cystine. Residue tyrosine 64 coordinates L-glutamate. N-linked (GlcNAc...) asparagine glycosylation occurs at asparagine 88. L-glutamate is bound by residues serine 152 and 173–175; that span reads SAT. Asparagine 210 is a glycosylation site (N-linked (GlcNAc...) asparagine). An L-glutamate-binding site is contributed by tyrosine 223. Intrachain disulfides connect cysteine 241-cysteine 530, cysteine 276-cysteine 278, cysteine 365-cysteine 381, cysteine 419-cysteine 426, cysteine 511-cysteine 531, cysteine 515-cysteine 534, cysteine 537-cysteine 549, and cysteine 552-cysteine 565. Aspartate 305 is an L-glutamate binding site. Asparagine 378 and asparagine 382 each carry an N-linked (GlcNAc...) asparagine glycan. Lysine 396 contacts L-glutamate. Asparagine 445 is a glycosylation site (N-linked (GlcNAc...) asparagine). Residues 581-603 form a helical membrane-spanning segment; sequence IAAVVFACLGLLATLFVTVVFII. The Cytoplasmic portion of the chain corresponds to 604–613; that stretch reads YRDTPVVKSS. A helical membrane pass occupies residues 614-636; the sequence is SRELCYIILAGICLGYLCTFCLI. Residues 637-644 lie on the Extracellular side of the membrane; sequence AKPKQIYC. A disulfide bridge links cysteine 644 with cysteine 733. Residues 645 to 667 form a helical membrane-spanning segment; sequence YLQRIGIGLSPAMSYSALVTKTN. At 668 to 693 the chain is on the cytoplasmic side; it reads RIARILAGSKKKICTKKPRFMSACAQ. Residues 694-714 form a helical membrane-spanning segment; sequence LVIAFILICIQLGIIVALFIM. Residues 715 to 737 lie on the Extracellular side of the membrane; sequence EPPDIMHDYPSIREVYLICNTTN. N-linked (GlcNAc...) asparagine glycosylation is present at asparagine 734. Residues 738 to 759 traverse the membrane as a helical segment; that stretch reads LGVVTPLGYNGLLILSCTFYAF. The Cytoplasmic portion of the chain corresponds to 760 to 772; sequence KTRNVPANFNEAK. A helical membrane pass occupies residues 773-795; the sequence is YIAFTMYTTCIIWLAFVPIYFGS. Residues 796–798 lie on the Extracellular side of the membrane; sequence NYK. A helical transmembrane segment spans residues 799–820; it reads IITMCFSVSLSATVALGCMFVP. Over 821–1212 the chain is Cytoplasmic; sequence KVYIILAKPE…RDYTQSSSSL (392 aa). A Phosphoserine modification is found at serine 861. Residues arginine 869 and arginine 925 each carry the omega-N-methylarginine modification. Disordered stretches follow at residues 937–971, 1010–1056, and 1132–1191; these read INKKENPNQTAVIKPFPKSTESRGLGAGAGAGGSA, FPAP…SQGS, and GAQA…ALCI. Over residues 961-971 the composition is skewed to gly residues; it reads LGAGAGAGGSA. A phosphoserine mark is found at serine 1018 and serine 1020. Residues 1132–1153 show a composition bias toward low complexity; it reads GAQAAGDAARESPAAGPEAAAA. The segment covering 1174-1185 has biased composition (polar residues); that stretch reads DSGSTTPNSPVS.

Belongs to the G-protein coupled receptor 3 family. As to quaternary structure, the PPXXF motif binds HOMER1, HOMER2 and HOMER3. Interacts with SIAH1, RYR1, RYR2, ITPR1, SHANK1, SHANK3 and TAMALIN. Interacts with NCDN. Isoform 2 interacts with NECAB2. Interacts with CAMK2A.

It is found in the cell membrane. In terms of biological role, G-protein coupled receptor for glutamate. Ligand binding causes a conformation change that triggers signaling via guanine nucleotide-binding proteins (G proteins) and modulates the activity of down-stream effectors. Signaling activates a phosphatidylinositol-calcium second messenger system and generates a calcium-activated chloride current. Plays an important role in the regulation of synaptic plasticity and the modulation of the neural network activity. The protein is Metabotropic glutamate receptor 5 (GRM5) of Homo sapiens (Human).